We begin with the raw amino-acid sequence, 1045 residues long: Elongation factor 3 (1045 aa).

HEAT repeat units follow at residues 5–42, 43–85, 86–123, 125–162, 166–203, 205–241, and 242–279; these read DQSL…GNII, EHDI…PSVE, PFVI…AINP, AIKA…AAKE, LRMP…TVDN, DIER…EVTP, and ATLS…LVED. The ADP site is built by I42, H44, and S83. ADP-binding residues include T392, H396, and E397. ABC transporter domains lie at 426 to 641 and 667 to 993; these read DEGE…YYEL and VKVS…KKED. ADP is bound by residues N703, E922, N925, and H951. The segment at 974–1045 is disordered; it reads SGHNWVSGQG…AYVSSDDEDF (72 aa). The span at 1007-1031 shows a compositional bias: basic residues; the sequence is GGKKKKKLSSAELRKKKKERMKKKK.

This sequence belongs to the ABC transporter superfamily. ABCF family. EF3 subfamily. In terms of assembly, monomer.

It localises to the cytoplasm. The protein localises to the cytosol. The catalysed reaction is ATP + H2O = ADP + phosphate + H(+). Its pathway is protein biosynthesis; polypeptide chain elongation. Ribosome-dependent ATPase that functions in cytoplasmic translation elongation. Required for the ATP-dependent release of deacylated tRNA from the ribosomal E-site during protein biosynthesis. Stimulates the eEF1A-dependent binding of aminoacyl-tRNA to the ribosomal A-site, which has reduced affinity for tRNA as long as the E-site is occupied. Assists translation termination by stimulating the release of nascent protein from the ribosome by release factors. The polypeptide is Elongation factor 3 (TEF3) (Candida glabrata (strain ATCC 2001 / BCRC 20586 / JCM 3761 / NBRC 0622 / NRRL Y-65 / CBS 138) (Yeast)).